The sequence spans 569 residues: Melanophilin (569 aa).

The 121-residue stretch at 4 to 124 (KLDLSKLTDD…MGSLEWYYGH (121 aa)) folds into the RabBD domain. Residues 58–112 (HLNETHCARCLQPYRLLVAPKRQCLDCHLFTCQDCSHAHPEEEGWLCDPCHLARV) form an FYVE-type zinc finger. The tract at residues 143–430 (GRLQGGGGPE…MQPGRTTDQE (288 aa)) is disordered. Basic and acidic residues-rich tracts occupy residues 352-362 (ETLKRKLEEMT) and 379-390 (EEEAGLNRKTSI). Positions 404–415 (SGQTSRQETSPR) are enriched in polar residues. A coiled-coil region spans residues 431–465 (LLELEDRVAVTASEVQQVESEVSNIKSKIAALQAA). The tract at residues 490-569 (GRLGQTPKDP…FAKPVMTQRP (80 aa)) is disordered. The span at 526 to 535 (SQDKAGDSFD) shows a compositional bias: basic and acidic residues.

Binds RAB27A that has been activated by GTP-binding via its N-terminus. Binds MYO5A via its C-terminal coiled coil domain.

The protein localises to the melanosome. Its function is as follows. Rab effector protein involved in melanosome transport. Serves as link between melanosome-bound RAB27A and the motor protein MYO5A. The sequence is that of Melanophilin (MLPH) from Felis catus (Cat).